The following is a 1022-amino-acid chain: Antigenic heat-stable 120 kDa protein (1022 aa).

Disordered stretches follow at residues methionine 1–threonine 41 and glycine 355–glutamine 403. Positions glutamate 19–glutamate 34 are enriched in basic and acidic residues. 2 stretches are compositionally biased toward polar residues: residues glycine 355–glutamine 380 and proline 387–glutamine 403.

The protein localises to the cytoplasm. The sequence is that of Antigenic heat-stable 120 kDa protein (sca4) from Rickettsia conorii (strain ATCC VR-613 / Malish 7).